Reading from the N-terminus, the 245-residue chain is Thioredoxin-like 1-2, chloroplastic (245 aa).

A chloroplast-targeting transit peptide spans 1–92 (MDAISSLGTN…TNHNMLEIQS (92 aa)). Residues 93-194 (ANHLVDSLLN…FKKALDKHGS (102 aa)) form the Thioredoxin domain. Catalysis depends on nucleophile residues C117 and C120. Residues C117 and C120 are joined by a disulfide bond.

Belongs to the thioredoxin family.

The protein localises to the plastid. It localises to the chloroplast. Its function is as follows. Probable thiol-disulfide oxidoreductase that may participate in various redox reactions. The sequence is that of Thioredoxin-like 1-2, chloroplastic from Arabidopsis thaliana (Mouse-ear cress).